The chain runs to 580 residues: Nucleolar protein 58 (580 aa).

The Nop domain maps to 285-410; that stretch reads IAPNLTALVG…LERKLAAMEG (126 aa). Residues 444 to 580 form a disordered region; the sequence is DAVTGDEPAS…KKKKKKKGEE (137 aa). Residues 465–487 show a composition bias toward acidic residues; the sequence is EVQDEEMADAADSDEESDSSDEE. Composition is skewed to basic and acidic residues over residues 495–505 and 547–562; these read SKDSELEKLAE and KKSA…RTDD. The span at 570 to 580 shows a compositional bias: basic residues; it reads KKKKKKKKGEE.

The protein belongs to the NOP5/NOP56 family.

It is found in the nucleus. The protein localises to the nucleolus. Functionally, required for pre-18S rRNA processing. May bind microtubules. This chain is Nucleolar protein 58 (nop58), found in Aspergillus niger (strain ATCC MYA-4892 / CBS 513.88 / FGSC A1513).